A 1180-amino-acid chain; its full sequence is Pesticidal crystal protein Cry4Aa (1180 aa).

This sequence belongs to the delta endotoxin family.

In terms of biological role, promotes colloidosmotic lysis by binding to the midgut epithelial cells of insects. The polypeptide is Pesticidal crystal protein Cry4Aa (cry4Aa) (Bacillus thuringiensis subsp. israelensis).